The chain runs to 255 residues: Small ribosomal subunit protein uS2 (255 aa).

Residues 233-255 (DFVAEEAASEESLEELAEIVEGK) form a disordered region.

The protein belongs to the universal ribosomal protein uS2 family.

This is Small ribosomal subunit protein uS2 (rpsB) from Lactococcus lactis subsp. lactis (strain IL1403) (Streptococcus lactis).